The sequence spans 373 residues: MSVKTQTITVLPGDHVGTEIVNEPTKVLKAIEAPTPYQKIQFDFKHHLIGGAAIDATGVPLPDDALESAKSSDAVLLGAVGGPKWGTGTVRPEQGLLKIRKELNLYANIRPCNFASDSLLELSPLKAEVVKGTNLIIVRELVGGIYFGERQEQEESEDHQTAWYRPKYTVDEVTRITRMAAFMALQHNPPLPIWSLDKANVLASSRLWRKTVDKVISEEFPALSVQHQLIDSAAMILIQNPTKLSGIIITSNMFGDIISDEASVIPGSLGLLPSASLASLPDTNTAFGLYEPCHGSAPDLPANKVNPIATILSAASMLRLALDCVKETEALEEAVKQVLDSGIRTADLRGTSSTTEVGDAIAETVTKILKQNT.

G82 to E93 provides a ligand contact to NAD(+). Positions 100, 110, 139, and 231 each coordinate substrate. Mg(2+) contacts are provided by D231, D256, and D260. An NAD(+)-binding site is contributed by G295 to N306.

Belongs to the isocitrate and isopropylmalate dehydrogenases family. In terms of assembly, homodimer. It depends on Mg(2+) as a cofactor. Mn(2+) is required as a cofactor.

It localises to the cytoplasm. The catalysed reaction is (2R,3S)-3-isopropylmalate + NAD(+) = 4-methyl-2-oxopentanoate + CO2 + NADH. Its pathway is amino-acid biosynthesis; L-leucine biosynthesis; L-leucine from 3-methyl-2-oxobutanoate: step 3/4. Catalyzes the oxidation of 3-carboxy-2-hydroxy-4-methylpentanoate (3-isopropylmalate) to 3-carboxy-4-methyl-2-oxopentanoate. The product decarboxylates to 4-methyl-2 oxopentanoate. The sequence is that of 3-isopropylmalate dehydrogenase (LEU2) from Candida albicans (Yeast).